The sequence spans 653 residues: Multidomain regulatory protein Rv1364c (653 aa).

2 positions are modified to phosphothreonine; by PknD: T54 and T81. In terms of domain architecture, PAC spans 86-142 (SGSEWRLQTDYDGSGVEERYFDFVVTPRRRADGSIEGVQLIVDDVTSRVRARQAAEA). The region spanning 177–396 (DIAAEYLVAA…DDVTLLAMQR (220 aa)) is the PPM-type phosphatase domain. Mn(2+)-binding residues include D211 and V212. Residue T299 is modified to Phosphothreonine; by PknD. 2 residues coordinate Mn(2+): D328 and D387. T390 bears the Phosphothreonine; by PknD mark. Residues 397 to 544 (RAPTPPLHIT…TMVRRAAFQQ (148 aa)) are anti-sigma factor kinase region. The residue at position 506 (S506) is a Phosphoserine; by PknD. Phosphothreonine; by PknD is present on residues T520 and T568. An STAS domain is found at 546-653 (IDSEFVSLVE…ADTEDIFAQE (108 aa)). Phosphoserine; by autocatalysis is present on S600.

Exists in solution as both monomer and dimer. Both the phosphorylated and unphosphorylated proteins form extended dimers. Interacts with SigF. Can efficiently bind to SigF independently of its autophosphorylation. Interaction between SigF and Rv1364c is reduced significantly upon the phosphorylation of both proteins by PknD. Requires Mn(2+) as cofactor. Mg(2+) is required as a cofactor. In terms of processing, autophosphorylated. Phosphorylated by PknD on multiple threonine and serine residues. Phosphorylation is antagonized by the phosphatase activity.

The catalysed reaction is O-phospho-L-seryl-[protein] + H2O = L-seryl-[protein] + phosphate. It catalyses the reaction O-phospho-L-threonyl-[protein] + H2O = L-threonyl-[protein] + phosphate. The enzyme catalyses L-seryl-[protein] + ATP = O-phospho-L-seryl-[protein] + ADP + H(+). It carries out the reaction L-threonyl-[protein] + ATP = O-phospho-L-threonyl-[protein] + ADP + H(+). Its activity is regulated as follows. The phosphatase domain is activated by the anti-sigma factor kinase domain. Its function is as follows. Primarily acts as an independent SigF regulator that is sensitive to the osmosensory signal, mediating the cross talk of PknD with the SigF regulon. Possesses both phosphatase and kinase activities. The kinase domain functions as a classic anti-sigma factor-like kinase to phosphorylate the anti-anti-sigma factor domain at the canonical regulatory site, and the phosphatase domain antagonizes this activity. This is Multidomain regulatory protein Rv1364c from Mycobacterium tuberculosis (strain ATCC 25618 / H37Rv).